Here is a 261-residue protein sequence, read N- to C-terminus: uncharacterized protein (261 aa).

A divalent metal cation contacts are provided by His7, His9, Glu96, His132, His156, and Asp211.

This sequence belongs to the metallo-dependent hydrolases superfamily. TatD-type hydrolase family. A divalent metal cation serves as cofactor.

This is an uncharacterized protein from Mycoplasma pneumoniae (strain ATCC 29342 / M129 / Subtype 1) (Mycoplasmoides pneumoniae).